The following is a 248-amino-acid chain: MAFSAKTSGSDDLKAIISAISTLVEEATFVATAEGITFRGMDPSHVALIDISWPNSAFEKYECDSNIKFGVRIDEFTKLIKRADKKDSITISVSKDSMLLIDIGSNKKYKIRLIESSATDTPLPKISYDAKIELATTSFEKILGDVQVVSDYLTIKAKPTGVEFAGKGDSGEAAIDVKKDDDSMEALKVKKESEGTYSLEYLNPIVRAVGGAAGSVTCEFSDAKPLRVEFKVANIGRIHFYLAPRVSS.

It belongs to the PCNA family. In terms of assembly, homotrimer. The subunits circularize to form a toroid; DNA passes through its center. Replication factor C (RFC) is required to load the toroid on the DNA.

Functionally, sliding clamp subunit that acts as a moving platform for DNA processing. Responsible for tethering the catalytic subunit of DNA polymerase and other proteins to DNA during high-speed replication. This Cenarchaeum symbiosum (strain A) protein is DNA polymerase sliding clamp.